Reading from the N-terminus, the 685-residue chain is Serotransferrin (685 aa).

A signal peptide spans 1–16 (MKPLLLLPLLGCLATI). Transferrin-like domains follow at residues 23–329 (VKWC…ALKI) and 340–666 (MKWC…SLRT). C26 and C48 are joined by a disulfide. Fe(3+) contacts are provided by D72 and Y102. 3 disulfides stabilise this stretch: C125/C206, C170/C184, and C234/C248. Hydrogencarbonate-binding residues include T127, K131, A133, and G134. Y200 contributes to the Fe(3+) binding site. Position 256 (H256) interacts with Fe(3+). Disulfide bonds link C343/C379 and C353/C370. Positions 394 and 428 each coordinate Fe(3+). 7 disulfides stabilise this stretch: C404-C678, C419-C639, C451-C526, C475-C667, C485-C499, C496-C509, and C566-C580. Hydrogencarbonate contacts are provided by T453, R457, A459, and G460. N476 carries an N-linked (GlcNAc...) asparagine glycan. Y520 contributes to the Fe(3+) binding site. H588 is a binding site for Fe(3+).

It belongs to the transferrin family. In terms of assembly, monomer.

The protein localises to the secreted. Transferrins are iron binding transport proteins which can bind two Fe(3+) ions in association with the binding of an anion, usually bicarbonate. This is Serotransferrin (tf) from Paralichthys olivaceus (Bastard halibut).